The following is a 273-amino-acid chain: HMP-PP phosphatase (273 aa).

Asp8 serves as the catalytic Nucleophile. Mg(2+) contacts are provided by Asp8, Asp10, and Asp212.

This sequence belongs to the HAD-like hydrolase superfamily. Cof family. It depends on Mg(2+) as a cofactor.

The catalysed reaction is 4-amino-2-methyl-5-(diphosphooxymethyl)pyrimidine + H2O = 4-amino-2-methyl-5-(phosphooxymethyl)pyrimidine + phosphate + H(+). Functionally, catalyzes the hydrolysis of 4-amino-2-methyl-5-hydroxymethylpyrimidine pyrophosphate (HMP-PP) to 4-amino-2-methyl-5-hydroxymethylpyrimidine phosphate (HMP-P). In Yersinia pestis bv. Antiqua (strain Antiqua), this protein is HMP-PP phosphatase.